A 326-amino-acid polypeptide reads, in one-letter code: S-methyl-5'-thioadenosine phosphorylase (326 aa).

Residues Ser44, 86–87, and 119–120 contribute to the phosphate site; these read RH and SA. Substrate is bound at residue Met220. Thr221 serves as a coordination point for phosphate. Residue 244–246 coordinates substrate; it reads DYD.

The protein belongs to the PNP/MTAP phosphorylase family. MTAP subfamily. In terms of assembly, homohexamer. Dimer of a homotrimer.

The enzyme catalyses S-methyl-5'-thioadenosine + phosphate = 5-(methylsulfanyl)-alpha-D-ribose 1-phosphate + adenine. Its pathway is amino-acid biosynthesis; L-methionine biosynthesis via salvage pathway; S-methyl-5-thio-alpha-D-ribose 1-phosphate from S-methyl-5'-thioadenosine (phosphorylase route): step 1/1. Its function is as follows. Catalyzes the reversible phosphorylation of S-methyl-5'-thioadenosine (MTA) to adenine and 5-methylthioribose-1-phosphate. Involved in the breakdown of MTA, a major by-product of polyamine biosynthesis. Responsible for the first step in the methionine salvage pathway after MTA has been generated from S-adenosylmethionine. Has broad substrate specificity with 6-aminopurine nucleosides as preferred substrates. This is S-methyl-5'-thioadenosine phosphorylase from Synechocystis sp. (strain PCC 6803 / GT-S).